The chain runs to 558 residues: Polysialic acid transport protein KpsD (558 aa).

Residues M1–A20 form the signal peptide.

The protein to E.coli K5 KpsD.

It is found in the periplasm. Its function is as follows. Involved in the translocation of the polysialic acid capsule across the outer membrane to the cell surface. May function as the periplasmic binding element of the PSA transport system, in which it transiently interacts with the membrane component of the transporter, binds polysaccharide and transports the polymer to a component in the outer membrane. In Escherichia coli, this protein is Polysialic acid transport protein KpsD (kpsD).